The chain runs to 250 residues: 1-(5-phosphoribosyl)-5-[(5-phosphoribosylamino)methylideneamino] imidazole-4-carboxamide isomerase (250 aa).

Aspartate 10 functions as the Proton acceptor in the catalytic mechanism. Aspartate 131 acts as the Proton donor in catalysis.

This sequence belongs to the HisA/HisF family.

Its subcellular location is the cytoplasm. It carries out the reaction 1-(5-phospho-beta-D-ribosyl)-5-[(5-phospho-beta-D-ribosylamino)methylideneamino]imidazole-4-carboxamide = 5-[(5-phospho-1-deoxy-D-ribulos-1-ylimino)methylamino]-1-(5-phospho-beta-D-ribosyl)imidazole-4-carboxamide. It participates in amino-acid biosynthesis; L-histidine biosynthesis; L-histidine from 5-phospho-alpha-D-ribose 1-diphosphate: step 4/9. The polypeptide is 1-(5-phosphoribosyl)-5-[(5-phosphoribosylamino)methylideneamino] imidazole-4-carboxamide isomerase (Desulfitobacterium hafniense (strain DSM 10664 / DCB-2)).